A 276-amino-acid chain; its full sequence is HTH-type transcriptional activator RhaR (276 aa).

Residues 174 to 272 form the HTH araC/xylS-type domain; that stretch reads ESLFSALNQS…SCTPTEYRSR (99 aa). DNA-binding regions (H-T-H motif) lie at residues 191 to 212 and 239 to 262; these read ADFCRQHQLAVSSVRRIFKQQT and VANIAIRCGYSDSNYFSSVFGKTF.

As to quaternary structure, binds DNA as a dimer.

It is found in the cytoplasm. Its function is as follows. Activates expression of the rhaSR operon in response to L-rhamnose. The sequence is that of HTH-type transcriptional activator RhaR from Mannheimia succiniciproducens (strain KCTC 0769BP / MBEL55E).